A 334-amino-acid polypeptide reads, in one-letter code: MSRFLLPVSVVGTVIGGTVLLKDYVAGGACPSKATIPGKTVIVTGANTGIGKQTALELAKRGGNVILACRDMEKCEVAAKDIRGETLNPRVRAERLDLASLKSIREFARKVIKEEERVDILVNNAAVMRCPHWTTEDGFEMQFGVNYLGHFLLTNLLLDKLKASAPSRIINLSSLAHVAGHIDFEDLNWQMKKYDTKAAYCQSKLAVVLFTKELSHRLQGSGVTVNALHPGVARTELGRHTGMHNSAFSGFMLGPFFWLLFKSPQLAAQPSTYLAVAEELENVSGKYFDGLREKAPSPEAEDEEVARRLWTESARLVGLAMAHGSPGRGHAIPR.

Ser2 carries the post-translational modification N-acetylserine. 45 to 51 (GANTGIG) is an NADP(+) binding site. Residue Ser174 coordinates substrate. Tyr200 serves as the catalytic Proton acceptor.

The protein belongs to the short-chain dehydrogenases/reductases (SDR) family.

The protein localises to the mitochondrion inner membrane. It carries out the reaction all-trans-retinol + NADP(+) = all-trans-retinal + NADPH + H(+). The protein operates within cofactor metabolism; retinol metabolism. Its function is as follows. Retinol dehydrogenase with a clear preference for NADP. Oxidizes all-trans-retinol, but seems to reduce all-trans-retinal with much higher efficiency. Has no activity towards steroid. This is Retinol dehydrogenase 13 (Rdh13) from Mus musculus (Mouse).